Consider the following 466-residue polypeptide: MDSTALKILQDKCICYICSDFMEDPVTSRCGHNFCFACLRLLWDDLQGNIFCPVCQTPFPPKSFSRNYQFRNMTETIRLLQKRQSKRKRQEEHTVCPKHDQPLVLFCVRDRDVLCTQCSLSVEHQGHYTCPIKKASSYHRKVLESAIATLKFGVKQVEEKLAVQHRRVLGLREEAQYQKIEIRYEIGQIKLFLQSEYEAHLNESHMEELRSFSELNGYLETLLDHVSTAKDLLKEVEAIHERSDVTLLRAYHKLQNLKSPKPWLFRTKQYGLSLPAQYSGLSRIIKQFQADVTFDRDTAHPQLVISEDRKSVFYKEAWPCVCASPQKFHLWPALLGCKGFDSGRQYWEVKVGDKPRWTLGVCQAHFSGDWSNQSSGFWAIGRYAENSYVTYGPLRTEFLPVVRPSKVGIFLDYELGELSFYNMNDRSLLYTFRNSFTSTLWPYFYIGTDSESLEILTHPTPDTGSY.

The segment at 15–56 adopts an RING-type zinc-finger fold; it reads CYICSDFMEDPVTSRCGHNFCFACLRLLWDDLQGNIFCPVCQ. Residues 91 to 132 form a B box-type zinc finger; that stretch reads EEHTVCPKHDQPLVLFCVRDRDVLCTQCSLSVEHQGHYTCPI. 4 residues coordinate Zn(2+): Cys-96, His-99, Cys-118, and His-124. The stretch at 171–223 forms a coiled coil; that stretch reads LREEAQYQKIEIRYEIGQIKLFLQSEYEAHLNESHMEELRSFSELNGYLETLL. One can recognise a B30.2/SPRY domain in the interval 272-462; the sequence is LSLPAQYSGL…LEILTHPTPD (191 aa).

The protein belongs to the TRIM/RBCC family.

Its function is as follows. E3 SUMO-protein ligase that mediates SUMOylation of TAB2 leading to inhibition of NF-kappa-B and MAPK pathways by suppressing the TRAF6/TAB2/TAK1 complex. The sequence is that of E3 SUMO-protein ligase TRIM60 (Trim60) from Mus musculus (Mouse).